The primary structure comprises 222 residues: Guanylate kinase (222 aa).

Residues 19 to 197 (GFLFILSSPS…SVSLIKSIYL (179 aa)) form the Guanylate kinase-like domain. Position 26–33 (26–33 (SPSGAGKS)) interacts with ATP.

This sequence belongs to the guanylate kinase family.

The protein localises to the cytoplasm. The enzyme catalyses GMP + ATP = GDP + ADP. Essential for recycling GMP and indirectly, cGMP. This Bartonella henselae (strain ATCC 49882 / DSM 28221 / CCUG 30454 / Houston 1) (Rochalimaea henselae) protein is Guanylate kinase.